A 361-amino-acid chain; its full sequence is Histidinol-phosphate aminotransferase (361 aa).

At lysine 221 the chain carries N6-(pyridoxal phosphate)lysine.

The protein belongs to the class-II pyridoxal-phosphate-dependent aminotransferase family. Histidinol-phosphate aminotransferase subfamily. The cofactor is pyridoxal 5'-phosphate.

It carries out the reaction L-histidinol phosphate + 2-oxoglutarate = 3-(imidazol-4-yl)-2-oxopropyl phosphate + L-glutamate. The protein operates within amino-acid biosynthesis; L-histidine biosynthesis; L-histidine from 5-phospho-alpha-D-ribose 1-diphosphate: step 7/9. This chain is Histidinol-phosphate aminotransferase, found in Methanocella arvoryzae (strain DSM 22066 / NBRC 105507 / MRE50).